Reading from the N-terminus, the 517-residue chain is Tyrosine-protein kinase Fgr (517 aa).

Gly2 is lipidated: N-myristoyl glycine. S-palmitoyl cysteine attachment occurs at residues Cys3 and Cys6. Phosphoserine is present on Ser13. Tyr32 carries the post-translational modification Phosphotyrosine. Phosphoserine is present on Ser50. One can recognise an SH3 domain in the interval 65-126 (TGVTIFVALY…PSNYVAPVDS (62 aa)). An interaction with CLNK region spans residues 102-103 (WW). Residues 132 to 229 (WYFGKISRKD…GLCYLLTAPC (98 aa)) form the SH2 domain. The residue at position 196 (Tyr196) is a Phosphotyrosine. Position 206 is a phosphoserine (Ser206). Residues 251 to 504 (IALERRLGTG…YLQSFLEDYF (254 aa)) enclose the Protein kinase domain. Residues 257–265 (LGTGCFGDV) and Lys279 each bind ATP. Asp370 functions as the Proton acceptor in the catalytic mechanism. At Tyr400 the chain carries Phosphotyrosine. Phosphotyrosine; by SRC is present on Tyr511.

It belongs to the protein kinase superfamily. Tyr protein kinase family. SRC subfamily. In terms of assembly, interacts with ITGB1, ITGB2, MS4A2/FCER1B, FCER1G and FCGR2. Interacts (via SH2 domain) with SYK (tyrosine phosphorylated). Interacts (via SH2 domain) with FLT3 (tyrosine phosphorylated). Interacts with PTK2/FAK1. Interacts (via SH2 domain) with HCLS1 (tyrosine phosphorylated by SYK). Interacts with SIRPA and PTPNS1. Interacts (not phosphorylated on tyrosine residues) with CBL; FGR tyrosine phosphorylation promotes dissociation. Interacts with CLNK. Post-translationally, ubiquitinated. Becomes ubiquitinated in response to ITGB2 signaling; this does not lead to degradation. In terms of processing, phosphorylated. Autophosphorylated on tyrosine residues. Becomes phosphorylated in response to FCGR2 engagement, cell adhesion and signaling by ITGB2. Prior phosphorylation at Tyr-511 by SRC inhibits ulterior autophosphorylation at Tyr-400. As to expression, expressed in natural killer cells (at protein level).

The protein resides in the cell membrane. The protein localises to the cell projection. It localises to the ruffle membrane. It is found in the cytoplasm. Its subcellular location is the cytosol. The protein resides in the cytoskeleton. The protein localises to the mitochondrion inner membrane. It localises to the mitochondrion intermembrane space. It carries out the reaction L-tyrosyl-[protein] + ATP = O-phospho-L-tyrosyl-[protein] + ADP + H(+). Activated by autophosphorylation. Prior phosphorylation at Tyr-511 by SRC inhibits ulterior autophosphorylation at Tyr-400. Activated by phorbol myristate acetate, phosphatidic acid and poly-Lys. Binding (via SH2 domain) of HCLS1 that is already phosphorylated by SYK strongly increases kinase activity. Its function is as follows. Non-receptor tyrosine-protein kinase that transmits signals from cell surface receptors devoid of kinase activity and contributes to the regulation of immune responses, including neutrophil, monocyte, macrophage and mast cell functions, cytoskeleton remodeling in response to extracellular stimuli, phagocytosis, cell adhesion and migration. Promotes mast cell degranulation, release of inflammatory cytokines and IgE-mediated anaphylaxis. Acts downstream of receptors that bind the Fc region of immunoglobulins, such as MS4A2/FCER1B, FCER1G and FCGR2. Acts downstream of ITGB1 and ITGB2, and regulates actin cytoskeleton reorganization, cell spreading and adhesion. Depending on the context, activates or inhibits cellular responses. Functions as a negative regulator of ITGB2 signaling, phagocytosis and SYK activity in monocytes. Required for normal ITGB1 and ITGB2 signaling, normal cell spreading and adhesion in neutrophils and macrophages. Functions as a positive regulator of cell migration and regulates cytoskeleton reorganization via RAC1 activation. Phosphorylates SYK (in vitro) and promotes SYK-dependent activation of AKT1 and MAP kinase signaling. Phosphorylates PLD2 in antigen-stimulated mast cells, leading to PLD2 activation and the production of the signaling molecules lysophosphatidic acid and diacylglycerol. Promotes activation of PIK3R1. Phosphorylates FASLG, and thereby regulates its ubiquitination and subsequent internalization. Phosphorylates ABL1. Promotes phosphorylation of CBL, CTTN, PIK3R1, PTK2/FAK1, PTK2B/PYK2 and VAV2. Phosphorylates HCLS1 that has already been phosphorylated by SYK, but not unphosphorylated HCLS1. Together with CLNK, it acts as a negative regulator of natural killer cell-activating receptors and inhibits interferon-gamma production. This is Tyrosine-protein kinase Fgr (Fgr) from Mus musculus (Mouse).